A 79-amino-acid chain; its full sequence is UPF0154 protein SSP1415 (79 aa).

A helical transmembrane segment spans residues 4-24 (WLAIVLIVLALILGLVGGFFL).

Belongs to the UPF0154 family.

The protein resides in the membrane. This is UPF0154 protein SSP1415 from Staphylococcus saprophyticus subsp. saprophyticus (strain ATCC 15305 / DSM 20229 / NCIMB 8711 / NCTC 7292 / S-41).